Consider the following 289-residue polypeptide: Acetyl-coenzyme A carboxylase carboxyl transferase subunit beta (289 aa).

Residues 27-289 enclose the CoA carboxyltransferase N-terminal domain; that stretch reads LWSKCPSCES…SFMRVPAGAA (263 aa). Zn(2+) is bound by residues C31, C34, C50, and C53. The C4-type zinc finger occupies 31-53; sequence CPSCESVLYRTDLESNSEVCPKC.

The protein belongs to the AccD/PCCB family. As to quaternary structure, acetyl-CoA carboxylase is a heterohexamer composed of biotin carboxyl carrier protein (AccB), biotin carboxylase (AccC) and two subunits each of ACCase subunit alpha (AccA) and ACCase subunit beta (AccD). It depends on Zn(2+) as a cofactor.

The protein resides in the cytoplasm. The catalysed reaction is N(6)-carboxybiotinyl-L-lysyl-[protein] + acetyl-CoA = N(6)-biotinyl-L-lysyl-[protein] + malonyl-CoA. It functions in the pathway lipid metabolism; malonyl-CoA biosynthesis; malonyl-CoA from acetyl-CoA: step 1/1. Its function is as follows. Component of the acetyl coenzyme A carboxylase (ACC) complex. Biotin carboxylase (BC) catalyzes the carboxylation of biotin on its carrier protein (BCCP) and then the CO(2) group is transferred by the transcarboxylase to acetyl-CoA to form malonyl-CoA. This is Acetyl-coenzyme A carboxylase carboxyl transferase subunit beta from Methylobacillus flagellatus (strain ATCC 51484 / DSM 6875 / VKM B-1610 / KT).